The sequence spans 202 residues: MPNDRVAPLPPNFVYSPHDKFYYAPATCNSMHYTTASYISAFIEFLVMGTGAICFYVMSHKSDSIGKWLFYIQAGITVLSLLTSALMAFGLWKENPQMLGSKLKFIEFIICFLLIWAVISIVCMAFGIQFTRQVFGIFGKVHRIEQDYGPIWPFNIAVVSFFTAAIAIWTRIIIQGAADYLYDKAYFADKQNVELRESSKTR.

Over 1 to 37 (MPNDRVAPLPPNFVYSPHDKFYYAPATCNSMHYTTAS) the chain is Cytoplasmic. A helical transmembrane segment spans residues 38-58 (YISAFIEFLVMGTGAICFYVM). Residues 59–68 (SHKSDSIGKW) are Extracellular-facing. The helical transmembrane segment at 69-89 (LFYIQAGITVLSLLTSALMAF) threads the bilayer. At 90–107 (GLWKENPQMLGSKLKFIE) the chain is on the cytoplasmic side. The helical transmembrane segment at 108 to 128 (FIICFLLIWAVISIVCMAFGI) threads the bilayer. Over 129–148 (QFTRQVFGIFGKVHRIEQDY) the chain is Extracellular. Residues 149 to 169 (GPIWPFNIAVVSFFTAAIAIW) form a helical membrane-spanning segment. At 170–202 (TRIIIQGAADYLYDKAYFADKQNVELRESSKTR) the chain is on the cytoplasmic side.

Interacts with vps-39.

The protein resides in the cell membrane. The protein localises to the cytoplasm. In terms of biological role, involved in cuticle formation and ensures cuticle shedding during larval development. Plays a role in maintaining the hypodermis. In association with vps-39, may play a role in vesicle tethering. In Caenorhabditis elegans, this protein is Protein cuti-1.